Here is a 202-residue protein sequence, read N- to C-terminus: Small ribosomal subunit protein uS4 (202 aa).

Positions 91 to 154 (SMLSSVLYNS…VNLPSVLAAI (64 aa)) constitute an S4 RNA-binding domain.

It belongs to the universal ribosomal protein uS4 family. As to quaternary structure, part of the 30S ribosomal subunit. Contacts protein S5. The interaction surface between S4 and S5 is involved in control of translational fidelity.

Functionally, one of the primary rRNA binding proteins, it binds directly to 16S rRNA where it nucleates assembly of the body of the 30S subunit. With S5 and S12 plays an important role in translational accuracy. The chain is Small ribosomal subunit protein uS4 from Ehrlichia ruminantium (strain Gardel).